Reading from the N-terminus, the 202-residue chain is Glycerol-3-phosphate acyltransferase (202 aa).

The next 5 helical transmembrane spans lie at 3–23 (NLII…LILA), 87–107 (LLWS…YLLF), 118–138 (GAMI…WVVI), 144–164 (ISSL…FIFN), and 167–187 (LEIH…YKHL).

This sequence belongs to the PlsY family. As to quaternary structure, probably interacts with PlsX.

The protein localises to the cell inner membrane. It carries out the reaction an acyl phosphate + sn-glycerol 3-phosphate = a 1-acyl-sn-glycero-3-phosphate + phosphate. It participates in lipid metabolism; phospholipid metabolism. In terms of biological role, catalyzes the transfer of an acyl group from acyl-phosphate (acyl-PO(4)) to glycerol-3-phosphate (G3P) to form lysophosphatidic acid (LPA). This enzyme utilizes acyl-phosphate as fatty acyl donor, but not acyl-CoA or acyl-ACP. This Campylobacter jejuni (strain RM1221) protein is Glycerol-3-phosphate acyltransferase.